The primary structure comprises 244 residues: Ribonuclease 3 (244 aa).

The RNase III domain occupies 7–134 (FEEVEKTLNI…IIAAIYIDSG (128 aa)). Mg(2+) is bound at residue Glu47. Asp51 is an active-site residue. Asn120 and Glu123 together coordinate Mg(2+). Residue Glu123 is part of the active site. The 70-residue stretch at 161–230 (DYKTNLQEIV…AQDALKKLKS (70 aa)) folds into the DRBM domain.

The protein belongs to the ribonuclease III family. Homodimer. It depends on Mg(2+) as a cofactor.

The protein resides in the cytoplasm. It carries out the reaction Endonucleolytic cleavage to 5'-phosphomonoester.. Digests double-stranded RNA. Involved in the processing of primary rRNA transcript to yield the immediate precursors to the large and small rRNAs (23S and 16S). Processes some mRNAs, and tRNAs when they are encoded in the rRNA operon. Processes pre-crRNA and tracrRNA of type II CRISPR loci if present in the organism. The sequence is that of Ribonuclease 3 from Clostridium kluyveri (strain NBRC 12016).